A 462-amino-acid polypeptide reads, in one-letter code: Alanine racemase (462 aa).

The Proton acceptor; specific for D-alanine role is filled by Lys34. Lys34 carries the post-translational modification N6-(pyridoxal phosphate)lysine. The tract at residues Ala73–Leu132 is unknown insert. Arg193 provides a ligand contact to substrate. The RPE1 insert domain occupies Asp286–Gly332. Residue Tyr357 is the Proton acceptor; specific for L-alanine of the active site. Position 405 (Met405) interacts with substrate.

Belongs to the alanine racemase family. The cofactor is pyridoxal 5'-phosphate.

It carries out the reaction L-alanine = D-alanine. The protein operates within amino-acid biosynthesis; D-alanine biosynthesis; D-alanine from L-alanine: step 1/1. Its function is as follows. Catalyzes the interconversion of L-alanine and D-alanine. May also act on other amino acids. This is Alanine racemase (alr) from Rickettsia felis (strain ATCC VR-1525 / URRWXCal2) (Rickettsia azadi).